The sequence spans 541 residues: Eukaryotic translation initiation factor 3 subunit L (541 aa).

A PCI domain is found at 308–516; that stretch reads TFSDILLYIQ…IHIADTKVSH (209 aa).

This sequence belongs to the eIF-3 subunit L family. As to quaternary structure, component of the eukaryotic translation initiation factor 3 (eIF-3) complex. The eIF-3 complex interacts with pix.

Its subcellular location is the cytoplasm. Functionally, component of the eukaryotic translation initiation factor 3 (eIF-3) complex, which is involved in protein synthesis of a specialized repertoire of mRNAs and, together with other initiation factors, stimulates binding of mRNA and methionyl-tRNAi to the 40S ribosome. The eIF-3 complex specifically targets and initiates translation of a subset of mRNAs involved in cell proliferation. The protein is Eukaryotic translation initiation factor 3 subunit L of Drosophila persimilis (Fruit fly).